Reading from the N-terminus, the 371-residue chain is MTFSPEPAYQHGQAPRTAILLVNLGTPDAPTPKAVGRYLKEFLSDPRVVEIPRLAWLPLLYGVILPLRARASALKYESIWLREAHMTGSPLLVYSERQAHALQRLLNQQGYELTVACAMRYGNPSIASVLEALRRQGTEQVLVLPMYPQYSGTTTATAFDEVFRVLGQWRNQPEIRLVKHFHDHPAYIAALHQQVGAYWAQHGTPDFARGDKLILSFHGVPRRTLELGDPYHCECLKTGRLLGDALGLQPGQYQVTFQSRFGKAEWLQPYTAPTLAELGKVGAGRVDVFCPGFPADCIETLEEIAMEGQTEFMVAGGKTFHFIPCMNDAQPWISALAEIALQHVQGWPLNMPHAHELEARRSRAQTRGAAA.

Fe cation-binding residues include His218 and Glu299.

This sequence belongs to the ferrochelatase family.

It localises to the cytoplasm. It carries out the reaction heme b + 2 H(+) = protoporphyrin IX + Fe(2+). It participates in porphyrin-containing compound metabolism; protoheme biosynthesis; protoheme from protoporphyrin-IX: step 1/1. In terms of biological role, catalyzes the ferrous insertion into protoporphyrin IX. In Cupriavidus pinatubonensis (strain JMP 134 / LMG 1197) (Cupriavidus necator (strain JMP 134)), this protein is Ferrochelatase.